We begin with the raw amino-acid sequence, 488 residues long: Membrane-bound lytic murein transglycosylase F (488 aa).

The signal sequence occupies residues 1–25 (MFARPAIRMRCATGLLAIGTLLMLA). Residues 26 to 269 (GCGEEPKPSV…RLKERYYGHV (244 aa)) form a non-LT domain region. The tract at residues 270–488 (DVLGYVGAYT…RTLDEQTPPL (219 aa)) is LT domain. E316 is a catalytic residue.

This sequence in the N-terminal section; belongs to the bacterial solute-binding protein 3 family. In the C-terminal section; belongs to the transglycosylase Slt family.

It is found in the cell outer membrane. The catalysed reaction is Exolytic cleavage of the (1-&gt;4)-beta-glycosidic linkage between N-acetylmuramic acid (MurNAc) and N-acetylglucosamine (GlcNAc) residues in peptidoglycan, from either the reducing or the non-reducing ends of the peptidoglycan chains, with concomitant formation of a 1,6-anhydrobond in the MurNAc residue.. In terms of biological role, murein-degrading enzyme that degrades murein glycan strands and insoluble, high-molecular weight murein sacculi, with the concomitant formation of a 1,6-anhydromuramoyl product. Lytic transglycosylases (LTs) play an integral role in the metabolism of the peptidoglycan (PG) sacculus. Their lytic action creates space within the PG sacculus to allow for its expansion as well as for the insertion of various structures such as secretion systems and flagella. The sequence is that of Membrane-bound lytic murein transglycosylase F from Ectopseudomonas mendocina (strain ymp) (Pseudomonas mendocina).